The primary structure comprises 193 residues: Imidazoleglycerol-phosphate dehydratase (193 aa).

It belongs to the imidazoleglycerol-phosphate dehydratase family.

It is found in the cytoplasm. It carries out the reaction D-erythro-1-(imidazol-4-yl)glycerol 3-phosphate = 3-(imidazol-4-yl)-2-oxopropyl phosphate + H2O. It participates in amino-acid biosynthesis; L-histidine biosynthesis; L-histidine from 5-phospho-alpha-D-ribose 1-diphosphate: step 6/9. The polypeptide is Imidazoleglycerol-phosphate dehydratase (Methanoculleus marisnigri (strain ATCC 35101 / DSM 1498 / JR1)).